We begin with the raw amino-acid sequence, 317 residues long: Beta-ketoacyl-[acyl-carrier-protein] synthase III (317 aa).

Active-site residues include Cys112 and His244. The ACP-binding stretch occupies residues 245–249 (QANLR). Asn274 is a catalytic residue.

Belongs to the thiolase-like superfamily. FabH family. As to quaternary structure, homodimer.

It localises to the cytoplasm. The enzyme catalyses malonyl-[ACP] + acetyl-CoA + H(+) = 3-oxobutanoyl-[ACP] + CO2 + CoA. Its pathway is lipid metabolism; fatty acid biosynthesis. Catalyzes the condensation reaction of fatty acid synthesis by the addition to an acyl acceptor of two carbons from malonyl-ACP. Catalyzes the first condensation reaction which initiates fatty acid synthesis and may therefore play a role in governing the total rate of fatty acid production. Possesses both acetoacetyl-ACP synthase and acetyl transacylase activities. Its substrate specificity determines the biosynthesis of branched-chain and/or straight-chain of fatty acids. The chain is Beta-ketoacyl-[acyl-carrier-protein] synthase III from Salmonella paratyphi B (strain ATCC BAA-1250 / SPB7).